Reading from the N-terminus, the 227-residue chain is MTDLSPVLTIDGPSGAGKGTVSRIVAARLGWHYLDSGALYRAVGVAASWADLDVSDPAALVRCTFDTRVEFDDAGEAGLRVLVNGADATSELRLETTGALASAIAAIPEVRSALKERQRAFRRAPGLVADGRDMGTVIFPDAAYKVFLTASAEERAGRRHKQLMEKGVSVIFDDLLREIMARDARDAQRVVAPLRPAEDAVLIDTSGMGIEDVVQRVVGLLADRAPL.

12–20 (GPSGAGKGT) is an ATP binding site.

Belongs to the cytidylate kinase family. Type 1 subfamily.

It is found in the cytoplasm. It carries out the reaction CMP + ATP = CDP + ADP. It catalyses the reaction dCMP + ATP = dCDP + ADP. This chain is Cytidylate kinase, found in Xanthomonas euvesicatoria pv. vesicatoria (strain 85-10) (Xanthomonas campestris pv. vesicatoria).